A 319-amino-acid polypeptide reads, in one-letter code: Pantothenate kinase (319 aa).

96 to 103 (GSVAVGKS) lines the ATP pocket.

The protein belongs to the prokaryotic pantothenate kinase family.

The protein resides in the cytoplasm. The catalysed reaction is (R)-pantothenate + ATP = (R)-4'-phosphopantothenate + ADP + H(+). It participates in cofactor biosynthesis; coenzyme A biosynthesis; CoA from (R)-pantothenate: step 1/5. In Bacillus velezensis (strain DSM 23117 / BGSC 10A6 / LMG 26770 / FZB42) (Bacillus amyloliquefaciens subsp. plantarum), this protein is Pantothenate kinase.